Reading from the N-terminus, the 181-residue chain is Crossover junction endodeoxyribonuclease RuvC (181 aa).

Catalysis depends on residues aspartate 7, glutamate 67, and aspartate 139. Aspartate 7, glutamate 67, and aspartate 139 together coordinate Mg(2+).

This sequence belongs to the RuvC family. Homodimer which binds Holliday junction (HJ) DNA. The HJ becomes 2-fold symmetrical on binding to RuvC with unstacked arms; it has a different conformation from HJ DNA in complex with RuvA. In the full resolvosome a probable DNA-RuvA(4)-RuvB(12)-RuvC(2) complex forms which resolves the HJ. Mg(2+) serves as cofactor.

It localises to the cytoplasm. The catalysed reaction is Endonucleolytic cleavage at a junction such as a reciprocal single-stranded crossover between two homologous DNA duplexes (Holliday junction).. In terms of biological role, the RuvA-RuvB-RuvC complex processes Holliday junction (HJ) DNA during genetic recombination and DNA repair. Endonuclease that resolves HJ intermediates. Cleaves cruciform DNA by making single-stranded nicks across the HJ at symmetrical positions within the homologous arms, yielding a 5'-phosphate and a 3'-hydroxyl group; requires a central core of homology in the junction. The consensus cleavage sequence is 5'-(A/T)TT(C/G)-3'. Cleavage occurs on the 3'-side of the TT dinucleotide at the point of strand exchange. HJ branch migration catalyzed by RuvA-RuvB allows RuvC to scan DNA until it finds its consensus sequence, where it cleaves and resolves the cruciform DNA. The sequence is that of Crossover junction endodeoxyribonuclease RuvC from Cupriavidus metallidurans (strain ATCC 43123 / DSM 2839 / NBRC 102507 / CH34) (Ralstonia metallidurans).